Consider the following 221-residue polypeptide: 2-C-methyl-D-erythritol 4-phosphate cytidylyltransferase (221 aa).

It belongs to the IspD/TarI cytidylyltransferase family. IspD subfamily.

The enzyme catalyses 2-C-methyl-D-erythritol 4-phosphate + CTP + H(+) = 4-CDP-2-C-methyl-D-erythritol + diphosphate. It functions in the pathway isoprenoid biosynthesis; isopentenyl diphosphate biosynthesis via DXP pathway; isopentenyl diphosphate from 1-deoxy-D-xylulose 5-phosphate: step 2/6. Functionally, catalyzes the formation of 4-diphosphocytidyl-2-C-methyl-D-erythritol from CTP and 2-C-methyl-D-erythritol 4-phosphate (MEP). This Roseobacter denitrificans (strain ATCC 33942 / OCh 114) (Erythrobacter sp. (strain OCh 114)) protein is 2-C-methyl-D-erythritol 4-phosphate cytidylyltransferase.